A 296-amino-acid chain; its full sequence is Remorin 4.1 (296 aa).

Disordered regions lie at residues 1 to 78, 121 to 142, and 242 to 266; these read MLTL…SGEN, TRIG…DSNP, and EKTQ…EGKR. Residues 21 to 39 show a composition bias toward basic and acidic residues; the sequence is ASDRRDETPSSEIVVRDIH. 2 stretches are compositionally biased toward polar residues: residues 41–53 and 62–78; these read MTTT…PQQR and PSRS…SGEN. Composition is skewed to basic and acidic residues over residues 121–135 and 253–266; these read TRIG…HGQV and RKAE…EGKR. Positions 226 to 261 form a coiled coil; the sequence is MKKIERKLEDRRAKAMEKTQNKVAKAQRKAEERRAT.

Belongs to the remorin family. As to quaternary structure, forms homodimer and heterodimer with REM4.2. Interacts with KIN11. In terms of processing, phosphorylated by KIN11. Probably ubiquitinated and degraded by the 26S proteasome pathway. Predominantly detected in bud, stem, root, flower, silique, and leaves, and enhanced dramatically in senescence leaf.

Its subcellular location is the cell membrane. Functionally, collaborates with REM4.2 to positively regulate the BCTV and BSCTV susceptibility. The sequence is that of Remorin 4.1 from Arabidopsis thaliana (Mouse-ear cress).